A 143-amino-acid polypeptide reads, in one-letter code: Transcriptional regulator MraZ (143 aa).

SpoVT-AbrB domains are found at residues 5–47 (EYEH…PRGV) and 76–119 (AADM…SPRR).

This sequence belongs to the MraZ family. Forms oligomers.

It localises to the cytoplasm. It is found in the nucleoid. In Roseiflexus castenholzii (strain DSM 13941 / HLO8), this protein is Transcriptional regulator MraZ.